The primary structure comprises 146 residues: Sordarin/hypoxysordarin biosynthesis cluster protein G (146 aa).

Its pathway is antibiotic biosynthesis. Part of the gene cluster that mediates the biosynthesis of sordarin and hypoxysordarin, glycoside antibiotics with a unique tetracyclic diterpene aglycone structure. First, the geranylgeranyl diphosphate synthase sdnC constructs GGDP from farnesyl diphosphate and isopentenyl diphosphate. The diterpene cyclase sdnA then catalyzes the cyclization of GGDP to afford cycloaraneosene. Cycloaraneosene is then hydroxylated four times by the putative cytochrome P450 monooxygenases sdnB, sdnE, sdnF and sdnH to give a hydroxylated cycloaraneosene derivative such as cycloaraneosene-8,9,13,19-tetraol. Although the order of the hydroxylations is unclear, at least C8, C9 and C13 of the cycloaraneosene skeleton are hydroxylated before the sordaricin formation. Dehydration of the 13-hydroxy group of the hydroxylated cycloaraneosene derivative might be catalyzed by an unassigned hypothetical protein such as sdnG and sdnP to construct the cyclopentadiene moiety. The FAD-dependent oxidoreductase sdnN is proposed to catalyze the oxidation at C9 of the hydroxylated cycloaraneosene derivative and also catalyze the Baeyer-Villiger oxidation to give the lactone intermediate. The presumed lactone intermediate would be hydrolyzed to give an acrolein moiety and a carboxylate moiety. Then, [4+2]cycloaddition would occur between the acrolein moiety and the cyclopentadiene moiety to give sordaricin. SdnN might also be involved in the [4+2]cycloaddition after the hypothesized oxidation to accommodate the oxidized product and prompt the [4+2]cycloaddition. GDP-6-deoxy-D-altrose may be biosynthesized from GDP-D-mannose by the putative GDP-mannose-4,6-dehydratase sdnI and the short-chain dehydrogenase sdnK. The glycosyltransferase sdnJ catalyzes the attachment of 6-deoxy-D-altrose onto the 19-hydroxy group of sordaricin to give 4'-O-demethylsordarin. The methyltransferase sdnD would complete the biosynthesis of sordarin. Sordarin can be further modified into hypoxysordarin. The unique acyl chain at the 3'-hydroxy group of hypoxysordarin would be constructed by an iterative type I PKS sdnO and the trans-acting polyketide methyltransferase sdnL. SdnL would be responsible for the introduction of an alpha-methyl group of the polyketide chain. Alternatively, the beta-lactamase-like protein sdnR might be responsible for the cleavage and transfer of the polyketide chain from the PKS sdnO to sordarin. Two putative cytochrome P450 monooxygenases, sdnQ and sdnT, might catalyze the epoxidations of the polyketide chain to complete the biosynthesis of hypoxysordarin. Transcriptional regulators sdnM and sdnS are presumably encoded for the transcriptional regulation of the expression of the sdn gene cluster. This is Sordarin/hypoxysordarin biosynthesis cluster protein G from Sordaria araneosa (Pleurage araneosa).